We begin with the raw amino-acid sequence, 276 residues long: uncharacterized protein (276 aa).

An N-terminal signal peptide occupies residues 1–29; that stretch reads MKSHVRSFKTYIRDEIIKKGGWVNAHAHA.

The protein belongs to the metallo-dependent hydrolases superfamily.

This is an uncharacterized protein from Haemophilus influenzae (strain ATCC 51907 / DSM 11121 / KW20 / Rd).